A 361-amino-acid polypeptide reads, in one-letter code: Phospho-N-acetylmuramoyl-pentapeptide-transferase (361 aa).

Helical transmembrane passes span 27 to 47 (GALF…ISLL), 72 to 92 (TPTM…LLWA), 99 to 119 (VWIT…DDYL), 139 to 159 (ALIA…GLAY), 169 to 189 (AIVN…VGAG), 200 to 220 (GLAI…AYLV), 240 to 260 (LAVV…FNAP), 264 to 284 (IFMG…VAVA), 289 to 309 (IVLA…IIQV), and 338 to 358 (QVVI…LATL).

This sequence belongs to the glycosyltransferase 4 family. MraY subfamily. Mg(2+) serves as cofactor.

Its subcellular location is the cell inner membrane. The enzyme catalyses UDP-N-acetyl-alpha-D-muramoyl-L-alanyl-gamma-D-glutamyl-meso-2,6-diaminopimeloyl-D-alanyl-D-alanine + di-trans,octa-cis-undecaprenyl phosphate = di-trans,octa-cis-undecaprenyl diphospho-N-acetyl-alpha-D-muramoyl-L-alanyl-D-glutamyl-meso-2,6-diaminopimeloyl-D-alanyl-D-alanine + UMP. It participates in cell wall biogenesis; peptidoglycan biosynthesis. In terms of biological role, catalyzes the initial step of the lipid cycle reactions in the biosynthesis of the cell wall peptidoglycan: transfers peptidoglycan precursor phospho-MurNAc-pentapeptide from UDP-MurNAc-pentapeptide onto the lipid carrier undecaprenyl phosphate, yielding undecaprenyl-pyrophosphoryl-MurNAc-pentapeptide, known as lipid I. This is Phospho-N-acetylmuramoyl-pentapeptide-transferase from Methylobacterium nodulans (strain LMG 21967 / CNCM I-2342 / ORS 2060).